A 44-amino-acid polypeptide reads, in one-letter code: uncharacterized protein (44 aa).

The chain crosses the membrane as a helical span at residues 6-26; sequence SILIRGGGGVLIVLILLLWIV.

The protein resides in the membrane. This is an uncharacterized protein from Ornithodoros (relapsing fever ticks).